The following is a 587-amino-acid chain: Zinc finger protein 69 (587 aa).

The interval 42–128 is disordered; that stretch reads NGTQQESLAD…TPGTTAAGSQ (87 aa). Residues 76 to 147 enclose the KRAB domain; it reads HDEATPGTPA…VDLSQEEWGQ (72 aa). C2H2-type zinc fingers lie at residues 271–293, 299–321, 327–349, 355–377, 383–405, 411–433, 439–461, 467–489, and 495–517; these read HKKK…ILEQ, KPAR…CMRA, NVCE…HTGE, KECG…HTGE, EECG…HTGE, DKCQ…HSGE, SECG…HTGE, TSCC…HTGE, and KECG…HTGV. Residues 564–587 are disordered; that stretch reads SRHQKIHRRNTFRDDPGHENKRQL. Positions 574 to 587 are enriched in basic and acidic residues; it reads TFRDDPGHENKRQL.

Belongs to the krueppel C2H2-type zinc-finger protein family.

Its subcellular location is the nucleus. Functionally, putative transcription factor that appears to regulate lipid metabolism. This is Zinc finger protein 69 from Mus musculus (Mouse).